The following is a 238-amino-acid chain: Fish-egg lectin (238 aa).

A run of 5 repeats spans residues 1 to 34, 35 to 68, 69 to 106, 107 to 156, and 157 to 199. Residues 1–199 are 5 X approximate tandem repeats; sequence LDCTVIDGNL…TGVTRSKPDG (199 aa). Intrachain disulfides connect Cys-3/Cys-234, Cys-100/Cys-153, Cys-128/Cys-133, and Cys-208/Cys-226. Asn-27 carries an N-linked (GlcNAc...) asparagine glycan.

It belongs to the tectonin family. Expressed in the eggs.

Its subcellular location is the secreted. Functionally, lipopolysaccharide-binding protein with a very low agglutinating activity for human A-type erythrocytes and interacts with both Gram-positive and Gram-negative bacteria. The polypeptide is Fish-egg lectin (Cyprinus carpio (Common carp)).